We begin with the raw amino-acid sequence, 424 residues long: Phosphomethylpyrimidine synthase (424 aa).

Residues N66, M95, Y124, H163, 185–187 (SRG), 226–229 (DGMR), and E265 contribute to the substrate site. A Zn(2+)-binding site is contributed by H269. F292 is a binding site for substrate. Zn(2+) is bound at residue H333. Positions 408, 411, and 415 each coordinate [4Fe-4S] cluster.

This sequence belongs to the ThiC family. It depends on [4Fe-4S] cluster as a cofactor.

It carries out the reaction 5-amino-1-(5-phospho-beta-D-ribosyl)imidazole + S-adenosyl-L-methionine = 4-amino-2-methyl-5-(phosphooxymethyl)pyrimidine + CO + 5'-deoxyadenosine + formate + L-methionine + 3 H(+). It participates in cofactor biosynthesis; thiamine diphosphate biosynthesis. Functionally, catalyzes the synthesis of the hydroxymethylpyrimidine phosphate (HMP-P) moiety of thiamine from aminoimidazole ribotide (AIR) in a radical S-adenosyl-L-methionine (SAM)-dependent reaction. This chain is Phosphomethylpyrimidine synthase, found in Thermotoga petrophila (strain ATCC BAA-488 / DSM 13995 / JCM 10881 / RKU-1).